A 150-amino-acid polypeptide reads, in one-letter code: NmrA-like family domain-containing protein 1 (150 aa).

Residues 7–12, 33–37, and K71 contribute to the NADP(+) site; these read GATGAQ and RNPEQ.

Belongs to the NmrA-type oxidoreductase family. As to quaternary structure, homodimer. Interacts with ASS1. Interaction is enhanced by low NADPH/NADP(+) ratios, which results in inhibition of ASS1 activity.

It is found in the cytoplasm. The protein resides in the perinuclear region. Its subcellular location is the nucleus. Functionally, redox sensor protein. Undergoes restructuring and subcellular redistribution in response to changes in intracellular NADPH/NADP(+) levels. At low NADPH concentrations the protein is found mainly as a monomer, and binds argininosuccinate synthase (ASS1), the enzyme involved in nitric oxide synthesis. Association with ASS1 impairs its activity and reduces the production of nitric oxide, which subsecuently prevents apoptosis. Under normal NADPH concentrations, the protein is found as a dimer and hides the binding site for ASS1. The homodimer binds one molecule of NADPH. Has higher affinity for NADPH than for NADP(+). Binding to NADPH is necessary to form a stable dimer. In Rattus norvegicus (Rat), this protein is NmrA-like family domain-containing protein 1.